Reading from the N-terminus, the 561-residue chain is Dihydroxy-acid dehydratase (561 aa).

Position 50 (cysteine 50) interacts with [2Fe-2S] cluster. Residue aspartate 82 participates in Mg(2+) binding. Position 123 (cysteine 123) interacts with [2Fe-2S] cluster. Mg(2+) is bound by residues aspartate 124 and lysine 125. Lysine 125 carries the post-translational modification N6-carboxylysine. Cysteine 195 is a [2Fe-2S] cluster binding site. Glutamate 447 provides a ligand contact to Mg(2+). Serine 473 functions as the Proton acceptor in the catalytic mechanism.

Belongs to the IlvD/Edd family. In terms of assembly, homodimer. Requires [2Fe-2S] cluster as cofactor. Mg(2+) is required as a cofactor.

It carries out the reaction (2R)-2,3-dihydroxy-3-methylbutanoate = 3-methyl-2-oxobutanoate + H2O. The enzyme catalyses (2R,3R)-2,3-dihydroxy-3-methylpentanoate = (S)-3-methyl-2-oxopentanoate + H2O. The protein operates within amino-acid biosynthesis; L-isoleucine biosynthesis; L-isoleucine from 2-oxobutanoate: step 3/4. It participates in amino-acid biosynthesis; L-valine biosynthesis; L-valine from pyruvate: step 3/4. Functions in the biosynthesis of branched-chain amino acids. Catalyzes the dehydration of (2R,3R)-2,3-dihydroxy-3-methylpentanoate (2,3-dihydroxy-3-methylvalerate) into 2-oxo-3-methylpentanoate (2-oxo-3-methylvalerate) and of (2R)-2,3-dihydroxy-3-methylbutanoate (2,3-dihydroxyisovalerate) into 2-oxo-3-methylbutanoate (2-oxoisovalerate), the penultimate precursor to L-isoleucine and L-valine, respectively. In Microcystis aeruginosa (strain NIES-843 / IAM M-2473), this protein is Dihydroxy-acid dehydratase.